The chain runs to 295 residues: Ribosomal RNA small subunit methyltransferase A (295 aa).

S-adenosyl-L-methionine contacts are provided by N40, V42, G67, E88, D118, and N135.

It belongs to the class I-like SAM-binding methyltransferase superfamily. rRNA adenine N(6)-methyltransferase family. RsmA subfamily.

The protein resides in the cytoplasm. The catalysed reaction is adenosine(1518)/adenosine(1519) in 16S rRNA + 4 S-adenosyl-L-methionine = N(6)-dimethyladenosine(1518)/N(6)-dimethyladenosine(1519) in 16S rRNA + 4 S-adenosyl-L-homocysteine + 4 H(+). Functionally, specifically dimethylates two adjacent adenosines (A1518 and A1519) in the loop of a conserved hairpin near the 3'-end of 16S rRNA in the 30S particle. May play a critical role in biogenesis of 30S subunits. The protein is Ribosomal RNA small subunit methyltransferase A of Arthrobacter sp. (strain FB24).